Here is a 267-residue protein sequence, read N- to C-terminus: Mannose-specific lectin 1 (267 aa).

An N-terminal signal peptide occupies residues 1–26 (MAKLLLFLLPAILGLLVPPRSWSAVA). Bulb-type lectin domains are found at residues 29 to 134 (TNYL…PSVP) and 148 to 255 (NNLL…PQAK). Beta-D-mannose-binding positions include 54–58 (QDDCN), Tyr-62, Trp-66, Gln-67, 173–177 (QGDCN), Tyr-181, and 185–188 (YGWQ). The Carbohydrate-binding motif 1 motif lies at 54–62 (QDDCNLVLY). Intrachain disulfides connect Cys-57/Cys-77 and Cys-176/Cys-198. Residues 173–181 (QGDCNLVLY) carry the Carbohydrate-binding motif 2 motif.

Forms heterotetramer of 2 chains 1 and 2 chains 2 arranged as a dimer of chain 1 and chain 2 heterodimers.

It is found in the secreted. Mannose-specific lectin. Shows agglutinating activity towards erythrocytes from rabbit. The chain is Mannose-specific lectin 1 from Colocasia esculenta (Wild taro).